Here is a 696-residue protein sequence, read N- to C-terminus: Polyribonucleotide nucleotidyltransferase (696 aa).

Residues Asp-489 and Asp-495 each contribute to the Mg(2+) site. The KH domain occupies 556-615 (PQYVTMKINPEKIRDVIGKGGVVIREITEATNCAIDISDDGTIKIAAHTTEEGEAAKRRI). The S1 motif domain occupies 625-693 (GKVYEGTVVK…RQGRVRLSMK (69 aa)).

Belongs to the polyribonucleotide nucleotidyltransferase family. As to quaternary structure, component of the RNA degradosome, which is a multiprotein complex involved in RNA processing and mRNA degradation. The cofactor is Mg(2+).

Its subcellular location is the cytoplasm. It carries out the reaction RNA(n+1) + phosphate = RNA(n) + a ribonucleoside 5'-diphosphate. In terms of biological role, involved in mRNA degradation. Catalyzes the phosphorolysis of single-stranded polyribonucleotides processively in the 3'- to 5'-direction. This is Polyribonucleotide nucleotidyltransferase from Coxiella burnetii (strain RSA 331 / Henzerling II).